Consider the following 77-residue polypeptide: MARVCDVTGKGPMVGNNVSHANNKTKRRFLPNLQYRRFWVETENRWVRLRVSSAALRLIDKNGIDAVLADLRARGQA.

Belongs to the bacterial ribosomal protein bL28 family.

This chain is Large ribosomal subunit protein bL28, found in Variovorax paradoxus (strain S110).